We begin with the raw amino-acid sequence, 371 residues long: MNKAPHETRVVVGMSGGVDSSVAALLLKEQGYDVIGIFMKNWDDTDENGVCTATEDYEDVVRVCNQIGIPYYAVNFEKQYWDKVFTYFLNEYKAGRTPNPDVMCNKEIKFKAFLEHAMSIGADYIATGHYARVEFRDGEYKMLRGADPNKDQTYFLNQLGQAQLSKVMFPIGHLQKADVRRIAKEAGLATAGKKDSTGICFIGERDFKEFLSHYLPAQPGVMKTLDGEVKGRHDGVMYYTIGQRHGLGIGGSGEPWFVVGKDVRENVLYVAQGFENEYLYSTSLKAVDVNWVSDRKPEAPFRCTAKFRYRQPDVGVTVHPLADGGAEVVFDAPARAVTPGQAVVFYNGEECLGGGTIDEVFRNGEKLWYVG.

ATP contacts are provided by residues 13-20 (GMSGGVDS) and M39. The interval 99-101 (NPD) is interaction with target base in tRNA. Residue C104 is the Nucleophile of the active site. An intrachain disulfide couples C104 to C200. Position 128 (G128) interacts with ATP. The segment at 150–152 (KDQ) is interaction with tRNA. Residue C200 is the Cysteine persulfide intermediate of the active site. Residues 308–309 (RY) form an interaction with tRNA region.

The protein belongs to the MnmA/TRMU family.

The protein resides in the cytoplasm. The enzyme catalyses S-sulfanyl-L-cysteinyl-[protein] + uridine(34) in tRNA + AH2 + ATP = 2-thiouridine(34) in tRNA + L-cysteinyl-[protein] + A + AMP + diphosphate + H(+). In terms of biological role, catalyzes the 2-thiolation of uridine at the wobble position (U34) of tRNA, leading to the formation of s(2)U34. This is tRNA-specific 2-thiouridylase MnmA 2 from Geobacillus kaustophilus (strain HTA426).